The following is a 316-amino-acid chain: Methionyl-tRNA formyltransferase (316 aa).

Serine 109 to proline 112 contacts (6S)-5,6,7,8-tetrahydrofolate.

The protein belongs to the Fmt family.

It carries out the reaction L-methionyl-tRNA(fMet) + (6R)-10-formyltetrahydrofolate = N-formyl-L-methionyl-tRNA(fMet) + (6S)-5,6,7,8-tetrahydrofolate + H(+). In terms of biological role, attaches a formyl group to the free amino group of methionyl-tRNA(fMet). The formyl group appears to play a dual role in the initiator identity of N-formylmethionyl-tRNA by promoting its recognition by IF2 and preventing the misappropriation of this tRNA by the elongation apparatus. This chain is Methionyl-tRNA formyltransferase, found in Nitrosomonas eutropha (strain DSM 101675 / C91 / Nm57).